A 326-amino-acid polypeptide reads, in one-letter code: Olfactory receptor 10X1 (326 aa).

Topologically, residues 1–41 are extracellular; sequence MVLNVYCCFFQISDIQTMKINQTILKEFILVGFSVYPHVQT. Asparagine 21 is a glycosylation site (N-linked (GlcNAc...) asparagine). Residues 42 to 62 traverse the membrane as a helical segment; that stretch reads FLFVVFFCLYLLTLAGNLIIM. The Cytoplasmic portion of the chain corresponds to 63–70; it reads GLTWVDRS. The chain crosses the membrane as a helical span at residues 71-91; sequence LHTPMYLFLSALSFSETCYTL. Residues 92–115 lie on the Extracellular side of the membrane; sequence TIVPKMLEDLLAKDRSISVTGCSL. Cysteine 113 and cysteine 205 are joined by a disulfide. Residues 116–136 form a helical membrane-spanning segment; sequence QMCFFLGLGGTNCIILTLMGY. Topologically, residues 137-155 are cytoplasmic; that stretch reads DRFLAICNPLRYPLLMTNI. The helical transmembrane segment at 156–176 threads the bilayer; it reads VCGQLVASACTAGFFISLTET. Residues 177 to 213 are Extracellular-facing; the sequence is ALIFRDSFCRPNLVKHFFCHMLAVIRLSCIDSNHTEF. The N-linked (GlcNAc...) asparagine glycan is linked to asparagine 209. The chain crosses the membrane as a helical span at residues 214 to 233; sequence IITLISVSGLLGTLLLIILT. Topologically, residues 234–253 are cytoplasmic; it reads DVFIISTVLRIPSAEGKQKA. The helical transmembrane segment at 254-274 threads the bilayer; sequence FTTCASHLTVVIIHFGFASIV. The Extracellular segment spans residues 275-284; the sequence is YLKPEASGDD. Residues 285–305 traverse the membrane as a helical segment; sequence TLIAVPYTVITPFLSPIIFSL. Residues 306–326 lie on the Cytoplasmic side of the membrane; the sequence is RNKDMKNAFRRMMGNTVALKK.

It belongs to the G-protein coupled receptor 1 family.

Its subcellular location is the cell membrane. Its function is as follows. Odorant receptor. This chain is Olfactory receptor 10X1 (OR10X1), found in Homo sapiens (Human).